The chain runs to 175 residues: Archaemetzincin (175 aa).

H125 contacts Zn(2+). The active-site Proton acceptor is E126. Positions 129, 135, 136, 141, 160, and 163 each coordinate Zn(2+).

It belongs to the peptidase M54 family. As to quaternary structure, monomer. Requires Zn(2+) as cofactor.

Its function is as follows. Probable zinc metalloprotease whose natural substrate is unknown. Does not show endo- or exopeptidase activity against resorufin labeled casein, p-nitroanilide (pNA), amidomethylcoumarin (AMC) (one to three amino acids in length), and hippuryl-aminoacid substrates. The sequence is that of Archaemetzincin from Methanopyrus kandleri (strain AV19 / DSM 6324 / JCM 9639 / NBRC 100938).